The chain runs to 385 residues: Pepsin A (385 aa).

Positions 1 to 15 are cleaved as a signal peptide; the sequence is MKWLLLLSLVVLSEC. Residues 16 to 59 constitute a propeptide, activation peptide; sequence LVKVPLVRKKSLRQNLIKNGKLKDFLKTHKHNPASKYFPEAAAL. Residues 73–382 enclose the Peptidase A1 domain; the sequence is YFGTIGIGTP…DRANNKVGLA (310 aa). Residue Asp91 is part of the active site. A disulfide bridge links Cys104 with Cys109. The residue at position 127 (Ser127) is a Phosphoserine. The cysteines at positions 265 and 269 are disulfide-linked. Asp274 is an active-site residue. An intrachain disulfide couples Cys308 to Cys341.

The protein belongs to the peptidase A1 family. Minor amounts of the active enzyme occur with 'Ala-58' at the amino end.

It is found in the secreted. It catalyses the reaction Preferential cleavage: hydrophobic, preferably aromatic, residues in P1 and P1' positions. Cleaves 1-Phe-|-Val-2, 4-Gln-|-His-5, 13-Glu-|-Ala-14, 14-Ala-|-Leu-15, 15-Leu-|-Tyr-16, 16-Tyr-|-Leu-17, 23-Gly-|-Phe-24, 24-Phe-|-Phe-25 and 25-Phe-|-Tyr-26 bonds in the B chain of insulin.. Its function is as follows. Shows particularly broad specificity; although bonds involving phenylalanine and leucine are preferred, many others are also cleaved to some extent. The chain is Pepsin A (PGA) from Sus scrofa (Pig).